A 77-amino-acid polypeptide reads, in one-letter code: VpAmp2.0 (77 aa).

Positions 1 to 23 are cleaved as a signal peptide; sequence MQLRKALLVIFVAYLLVTDEAEA. Positions 49 to 77 are excised as a propeptide; sequence RKREIEDLFDPYQKDLDLQRLDRFFSQFQ.

This sequence belongs to the non-disulfide-bridged peptide (NDBP) superfamily. Medium-length antimicrobial peptide (group 3) family. In terms of tissue distribution, expressed by the venom gland.

It localises to the secreted. It is found in the target cell membrane. Its function is as follows. Antimicrobial peptide with potent activity against Gram-positive bacteria S.aureus (MIC=10 uM) and S.agalactiaea (MIC=15 uM), and Gram-negative bacteria E.coli (MIC=24 uM) and P.aeruginosa (MIC=15 uM), as well as against yeasts Candida albicans (MIC=3.1 uM) and C.glabrata (MIC=25 uM). Also elicits low hemolysis on human erythrocytes (HC(50)=167 uM). This is VpAmp2.0 from Mesomexovis punctatus (Scorpion).